A 128-amino-acid polypeptide reads, in one-letter code: Small ribosomal subunit protein eS8 (128 aa).

The protein belongs to the eukaryotic ribosomal protein eS8 family. As to quaternary structure, part of the 30S ribosomal subunit.

This Methanococcus maripaludis (strain C6 / ATCC BAA-1332) protein is Small ribosomal subunit protein eS8.